The primary structure comprises 260 residues: 3-deoxy-manno-octulosonate cytidylyltransferase (260 aa).

It belongs to the KdsB family.

It is found in the cytoplasm. It catalyses the reaction 3-deoxy-alpha-D-manno-oct-2-ulosonate + CTP = CMP-3-deoxy-beta-D-manno-octulosonate + diphosphate. Its pathway is nucleotide-sugar biosynthesis; CMP-3-deoxy-D-manno-octulosonate biosynthesis; CMP-3-deoxy-D-manno-octulosonate from 3-deoxy-D-manno-octulosonate and CTP: step 1/1. It functions in the pathway bacterial outer membrane biogenesis; lipopolysaccharide biosynthesis. Functionally, activates KDO (a required 8-carbon sugar) for incorporation into bacterial lipopolysaccharide in Gram-negative bacteria. The polypeptide is 3-deoxy-manno-octulosonate cytidylyltransferase (Polaromonas naphthalenivorans (strain CJ2)).